Consider the following 295-residue polypeptide: Protoheme IX farnesyltransferase (295 aa).

Over Met1 to Ile9 the chain is Cytoplasmic. A helical membrane pass occupies residues Thr10 to Leu28. The Periplasmic portion of the chain corresponds to Ala29 to Ala37. The helical transmembrane segment at Leu38 to Phe56 threads the bilayer. Topologically, residues Asn57–Gln78 are cytoplasmic. A helical transmembrane segment spans residues Gly79–Gly97. Residues Phe98–Pro107 are Periplasmic-facing. A helical transmembrane segment spans residues Leu108–Leu126. Over Trp127 to Pro197 the chain is Cytoplasmic. The chain crosses the membrane as a helical span at residues Val198 to Phe216. Over Val217–Tyr228 the chain is Periplasmic. The chain crosses the membrane as a helical span at residues Ala229–Met247. At Ala248–Ser268 the chain is on the cytoplasmic side. Residues Ile269–Ala287 form a helical membrane-spanning segment. Residues Asp288–Arg295 lie on the Periplasmic side of the membrane.

It belongs to the UbiA prenyltransferase family. Requires Mg(2+) as cofactor. Ca(2+) serves as cofactor.

It localises to the cell inner membrane. The catalysed reaction is heme b + (2E,6E)-farnesyl diphosphate + H2O = Fe(II)-heme o + diphosphate. Functionally, converts protoheme IX and farnesyl diphosphate to heme O. The chain is Protoheme IX farnesyltransferase (cyoE) from Pseudomonas putida (Arthrobacter siderocapsulatus).